A 142-amino-acid polypeptide reads, in one-letter code: MGKTRGMGAGRKLKRLRINQRWADKQYKKSHLGNEWKKPFAGSSHAKGIVLEKIGIEAKQPNSAIRKCARVQLIKNGKKIAAFVPNDGCLNYIEENDEVLIAGFGRKGHAVGDIPGVRFKVVKVSGVSLLALFKEKKEKPRS.

A Hydroxyproline modification is found at Pro-61.

Belongs to the universal ribosomal protein uS12 family.

The sequence is that of Small ribosomal subunit protein uS12y (RPS23B) from Arabidopsis thaliana (Mouse-ear cress).